We begin with the raw amino-acid sequence, 241 residues long: Eukaryotic translation initiation factor 3 subunit J (241 aa).

Residues 1–97 (MEEDWEQLSE…EEEDMTPEQK (97 aa)) form a disordered region. Positions 28–45 (GEDEEEEVKDSWEDEDEL) are enriched in acidic residues. Residues 31-119 (EEEEVKDSWE…ESDLKNALDT (89 aa)) are a coiled coil. Composition is skewed to basic and acidic residues over residues 46–58 (EEKK…ETPK) and 69–87 (IADK…RLEK).

It belongs to the eIF-3 subunit J family. In terms of assembly, component of the eukaryotic translation initiation factor 3 (eIF-3) complex.

The protein localises to the cytoplasm. In terms of biological role, component of the eukaryotic translation initiation factor 3 (eIF-3) complex, which is involved in protein synthesis of a specialized repertoire of mRNAs and, together with other initiation factors, stimulates binding of mRNA and methionyl-tRNAi to the 40S ribosome. The eIF-3 complex specifically targets and initiates translation of a subset of mRNAs involved in cell proliferation. In Aedes aegypti (Yellowfever mosquito), this protein is Eukaryotic translation initiation factor 3 subunit J.